Reading from the N-terminus, the 290-residue chain is Dual-specificity RNA pseudouridine synthase RluF (290 aa).

Residues 7-74 (VRLNKYISES…EDLVLIALNK (68 aa)) enclose the S4 RNA-binding domain. Interaction with RNA regions lie at residues 105–108 (RLDK) and 187–190 (RQIR). D107 serves as the catalytic Nucleophile. A disordered region spans residues 241–290 (SEAKPKAKAKPKTVGIKRPVVKMEKTAEKGGRPASNGKRFTSPGRKKKGR). Positions 261–271 (VKMEKTAEKGG) are enriched in basic and acidic residues.

It belongs to the pseudouridine synthase RsuA family. Monomer.

It carries out the reaction uridine(2604) in 23S rRNA = pseudouridine(2604) in 23S rRNA. It catalyses the reaction uridine(35) in tRNA(Tyr) = pseudouridine(35) in tRNA(Tyr). Dual specificity enzyme that catalyzes the synthesis of pseudouridine from uracil-2604 in 23S ribosomal RNA and from uracil-35 in the anticodon of tRNA(Tyr). The chain is Dual-specificity RNA pseudouridine synthase RluF (rluF) from Escherichia coli O6:H1 (strain CFT073 / ATCC 700928 / UPEC).